The sequence spans 270 residues: uncharacterized protein (270 aa).

The HTH lysR-type domain occupies 1–50; that stretch reads LTEVVKAQSFTKAAENLYTSQPSISRDIKRLENDYDVKVFEFKHSKMTLT. Positions 10–29 form a DNA-binding region, H-T-H motif; the sequence is FTKAAENLYTSQPSISRDIK.

The protein belongs to the LysR transcriptional regulatory family.

This is an uncharacterized protein from Staphylococcus xylosus.